Here is a 349-residue protein sequence, read N- to C-terminus: Biotin synthase (349 aa).

The Radical SAM core domain maps to 70–295 (PEVEVEGIIS…RTMLRFAGGR (226 aa)). Residues C85, C89, and C92 each coordinate [4Fe-4S] cluster. Residues C128, C161, C220, and R290 each contribute to the [2Fe-2S] cluster site.

The protein belongs to the radical SAM superfamily. Biotin synthase family. Homodimer. It depends on [4Fe-4S] cluster as a cofactor. The cofactor is [2Fe-2S] cluster.

It carries out the reaction (4R,5S)-dethiobiotin + (sulfur carrier)-SH + 2 reduced [2Fe-2S]-[ferredoxin] + 2 S-adenosyl-L-methionine = (sulfur carrier)-H + biotin + 2 5'-deoxyadenosine + 2 L-methionine + 2 oxidized [2Fe-2S]-[ferredoxin]. The protein operates within cofactor biosynthesis; biotin biosynthesis; biotin from 7,8-diaminononanoate: step 2/2. Its function is as follows. Catalyzes the conversion of dethiobiotin (DTB) to biotin by the insertion of a sulfur atom into dethiobiotin via a radical-based mechanism. This is Biotin synthase from Mycobacterium bovis (strain ATCC BAA-935 / AF2122/97).